The following is a 334-amino-acid chain: Serine racemase (334 aa).

Glu-13 contributes to the Mg(2+) binding site. Ser-31, Ser-32, Ile-33, Lys-51, and Thr-52 together coordinate ATP. Catalysis depends on proton acceptor residues Lys-56 and Ser-84. An N6-(pyridoxal phosphate)lysine modification is found at Lys-56. A pyridoxal 5'-phosphate-binding site is contributed by Asn-86. An ATP-binding site is contributed by Gln-89. Cys-113 bears the S-nitrosocysteine mark. Tyr-121 contacts ATP. Asn-154 contributes to the pyridoxal 5'-phosphate binding site. Asp-178 contributes to the Mg(2+) binding site. Residues Gly-185, Gly-186, Gly-187, Gly-188, and Met-189 each contribute to the pyridoxal 5'-phosphate site. Mg(2+) contacts are provided by Glu-210, Ala-214, Asp-216, and Asn-247. Positions 210, 214, 216, and 247 each coordinate Ca(2+). Mn(2+) is bound by residues Glu-210, Ala-214, and Asp-216. Lys-279 serves as a coordination point for ATP. Ser-313 lines the pyridoxal 5'-phosphate pocket. Asn-316 contributes to the ATP binding site.

Belongs to the serine/threonine dehydratase family. Homodimer. Mg(2+) serves as cofactor. Requires Mn(2+) as cofactor. It depends on Ca(2+) as a cofactor. The cofactor is pyridoxal 5'-phosphate. S-nitrosylated, leading to decrease the enzyme activity.

It carries out the reaction L-serine = D-serine. The enzyme catalyses L-serine = pyruvate + NH4(+). The catalysed reaction is D-serine = pyruvate + NH4(+). In terms of biological role, catalyzes the synthesis of D-serine from L-serine. D-serine is a key coagonist with glutamate at NMDA receptors. Has dehydratase activity towards both L-serine and D-serine. The chain is Serine racemase (SRR) from Bos taurus (Bovine).